Here is a 294-residue protein sequence, read N- to C-terminus: Zinc finger protein 346 (294 aa).

Met-1 is subject to N-acetylmethionine. Residues 1 to 19 (MECPAPDATDAADPGEAGP) show a composition bias toward low complexity. Positions 1 to 35 (MECPAPDATDAADPGEAGPYKGSEEPEGREPDGVR) are disordered. Positions 22–35 (GSEEPEGREPDGVR) are enriched in basic and acidic residues. A Matrin-type 1 zinc finger spans residues 70-104 (FTSTQCKVCCAMLISESQKLAHYQSKKHANKVKRY). Cys-75, Cys-78, His-91, and His-97 together coordinate Zn(2+). Lys-114 is covalently cross-linked (Glycyl lysine isopeptide (Lys-Gly) (interchain with G-Cter in SUMO2)). The Matrin-type 2 zinc finger occupies 131–165 (DKNHCCPICNMTFSSPAVAQSHYLGKTHAKSLKLK). Zn(2+)-binding residues include Cys-136, Cys-139, His-152, and His-158. A Glycyl lysine isopeptide (Lys-Gly) (interchain with G-Cter in SUMO2) cross-link involves residue Lys-170. 2 consecutive Matrin-type zinc fingers follow at residues 182–216 (DPDK…ETKL) and 236–270 (GKGY…SPKT). Residues 269–294 (KTLVTLGSQTPVQTQPTPKDSSTVQD) are disordered.

Forms a heteromeric complex with XPO5 and ILF3. Found in a nuclear export complex with XPO5, RAN, ILF3, ZNF346 and double-stranded RNA. Interacts with XPO5. Interacts with ILF3 in an RNA-independent manner. As to expression, expressed in all tissues tested, including heart, brain, spleen, lung, liver, muscle, kidney and testis. Exogenous expression induced apoptosis.

Its subcellular location is the nucleus. The protein localises to the nucleolus. It localises to the cytoplasm. In terms of biological role, binds with low affinity to dsDNA and ssRNA, and with high affinity to dsRNA, with no detectable sequence specificity. May bind to specific miRNA hairpins. This Mus musculus (Mouse) protein is Zinc finger protein 346 (Znf346).